The chain runs to 933 residues: Progesterone receptor (933 aa).

A disordered region spans residues 1–157 (MTELKAKGPR…PEDPPAAPAT (157 aa)). Residues 1 to 164 (MTELKAKGPR…PATQRVLSPL (164 aa)) are AF3; mediates transcriptional activation (in isoform B). The modulating, Pro-Rich stretch occupies residues 1–566 (MTELKAKGPR…YSFESLPQKI (566 aa)). K7 is covalently cross-linked (Glycyl lysine isopeptide (Lys-Gly) (interchain with G-Cter in SUMO)). A Phosphoserine modification is found at S20. An LXXL motif 1 motif is present at residues 55 to 59 (LDGLL). Phosphoserine is present on residues S81 and S102. Positions 115-119 (LDTLL) match the LXXL motif 2 motif. S130 and S162 each carry phosphoserine. Residues 165 to 305 (MSRSGCKVGD…LATTVMDFIH (141 aa)) are mediates transcriptional transrepression (in isoform A). A Nuclear localization signal motif is present at residues 183 to 187 (KVLPR). Phosphoserine occurs at positions 190 and 213. A disordered region spans residues 195–241 (LLLPASESPHWSGAPVKPSPQAAAVEVEEEDGSESEESAGPLLKGKP). Positions 220-231 (EVEEEDGSESEE) are enriched in acidic residues. Residues 232–241 (SAGPLLKGKP) are compositionally biased toward low complexity. Position 294 is a phosphoserine; by MAPK1 (S294). The segment at 331-351 (GGAGAASAFAPPRSSPCASST) is disordered. Residues 335–350 (AASAFAPPRSSPCASS) are compositionally biased toward low complexity. S345 bears the Phosphoserine; by MAPK mark. K388 participates in a covalent cross-link: Glycyl lysine isopeptide (Lys-Gly) (interchain with G-Cter in SUMO); alternate. K388 is covalently cross-linked (Glycyl lysine isopeptide (Lys-Gly) (interchain with G-Cter in ubiquitin); alternate). S400 bears the Phosphoserine; by CDK2 mark. Positions 415 to 452 (PDFPLGPPPPLPPRATPSRPGEAAVTAAPASASVSSAS) are disordered. A compositionally biased stretch (pro residues) spans 418 to 429 (PLGPPPPLPPRA). A compositionally biased stretch (low complexity) spans 430 to 452 (TPSRPGEAAVTAAPASASVSSAS). An AF1; mediates transcriptional activation region spans residues 456 to 546 (STLECILYKA…VYPPYLNYLR (91 aa)). Residue K531 forms a Glycyl lysine isopeptide (Lys-Gly) (interchain with G-Cter in SUMO) linkage. 2 consecutive NR C4-type zinc fingers follow at residues 567 to 587 (CLIC…CGSC) and 603 to 627 (CAGR…LRKC). The segment at residues 567 to 639 (CLICGDEASG…AGMVLGGRKF (73 aa)) is a DNA-binding region (nuclear receptor). S676 carries the phosphoserine modification. The 235-residue stretch at 679–913 (QDIQLIPPLI…EFPEMMSEVI (235 aa)) folds into the NR LBD domain. The AF2; mediates transcriptional activation stretch occupies residues 687-933 (LINLLMSIEP…MVKPLLFHKK (247 aa)). R766 lines the progesterone pocket.

It belongs to the nuclear hormone receptor family. NR3 subfamily. As to quaternary structure, interacts with SMARD1 and UNC45A. Interacts with CUEDC2; the interaction promotes ubiquitination, decreases sumoylation, and represses transcriptional activity. Interacts with PIAS3; the interaction promotes sumoylation of PR in a hormone-dependent manner, inhibits DNA-binding, and alters nuclear export. Interacts with SP1; the interaction requires ligand-induced phosphorylation on Ser-345 by ERK1/2 MAPK. Interacts with PRMT2. Isoform A interacts with NCOR2. Isoform B (but not isoform A) interacts with NCOA2 and NCOA1. Isoform B (but not isoform A) interacts with KLF9. Interacts with GTF2B. Post-translationally, phosphorylated on multiple serine sites. Several of these sites are hormone-dependent. Phosphorylation on Ser-294 occurs preferentially on isoform B, is highly hormone-dependent and modulates ubiquitination and sumoylation on Lys-388. Phosphorylation on Ser-102 and Ser-345 also requires induction by hormone. Basal phosphorylation on Ser-81, Ser-162, Ser-190 and Ser-400 is increased in response to progesterone and can be phosphorylated in vitro by the CDK2-A1 complex. Increased levels of phosphorylation on Ser-400 also in the presence of EGF, heregulin, IGF, PMA and FBS. Phosphorylation at this site by CDK2 is ligand-independent, and increases nuclear translocation and transcriptional activity. Phosphorylation at Ser-162 and Ser-294, but not at Ser-190, is impaired during the G(2)/M phase of the cell cycle. Phosphorylation on Ser-345 by ERK1/2 MAPK is required for interaction with SP1. Sumoylation is hormone-dependent and represses transcriptional activity. Sumoylation on all three sites is enhanced by PIAS3. Desumoylated by SENP1. Sumoylation on Lys-388, the main site of sumoylation, is repressed by ubiquitination on the same site, and modulated by phosphorylation at Ser-294. In terms of processing, ubiquitination is hormone-dependent and represses sumoylation on the same site. Promoted by MAPK-mediated phosphorylation on Ser-294. Ubiquitinated by UBR5, leading to its degradation: UBR5 specifically recognizes and binds ligand-bound PGR when it is not associated with coactivators (NCOAs). In presence of NCOAs, the UBR5-degron is not accessible, preventing its ubiquitination and degradation. Post-translationally, palmitoylated by ZDHHC7 and ZDHHC21. Palmitoylation is required for plasma membrane targeting and for rapid intracellular signaling via ERK and AKT kinases and cAMP generation. In reproductive tissues the expression of isoform A and isoform B varies as a consequence of developmental and hormonal status. Isoform A and isoform B are expressed in comparable levels in uterine glandular epithelium during the proliferative phase of the menstrual cycle. Expression of isoform B but not of isoform A persists in the glands during mid-secretory phase. In the stroma, isoform A is the predominant form throughout the cycle. Heterogeneous isoform expression between the glands of the endometrium basalis and functionalis is implying region-specific responses to hormonal stimuli.

The protein resides in the nucleus. Its subcellular location is the cytoplasm. It is found in the mitochondrion outer membrane. Its function is as follows. The steroid hormones and their receptors are involved in the regulation of eukaryotic gene expression and affect cellular proliferation and differentiation in target tissues. Depending on the isoform, progesterone receptor functions as a transcriptional activator or repressor. In terms of biological role, ligand-dependent transdominant repressor of steroid hormone receptor transcriptional activity including repression of its isoform B, MR and ER. Transrepressional activity may involve recruitment of corepressor NCOR2. Functionally, transcriptional activator of several progesteron-dependent promoters in a variety of cell types. Involved in activation of SRC-dependent MAPK signaling on hormone stimulation. Increases mitochondrial membrane potential and cellular respiration upon stimulation by progesterone. The sequence is that of Progesterone receptor (PGR) from Homo sapiens (Human).